The following is a 183-amino-acid chain: Small ribosomal subunit protein uS4c (183 aa).

Residues 82 to 143 enclose the S4 RNA-binding domain; that stretch reads MRLDNILFRL…KQRSKALIQN (62 aa).

Belongs to the universal ribosomal protein uS4 family. Part of the 30S ribosomal subunit. Contacts protein S5. The interaction surface between S4 and S5 is involved in control of translational fidelity.

The protein localises to the plastid. The protein resides in the chloroplast. Its function is as follows. One of the primary rRNA binding proteins, it binds directly to 16S rRNA where it nucleates assembly of the body of the 30S subunit. With S5 and S12 plays an important role in translational accuracy. This chain is Small ribosomal subunit protein uS4c (rps4), found in Aristea capitata.